Here is a 154-residue protein sequence, read N- to C-terminus: MAVSIRLARGGAKKRPYYRIVVADARSPRDGAFIEKIGAYNPLLAKDDPKRVVLDTDRAKHWLSVGAQPTDRVARFLDAAGVQERAARSNPKKAEPGEKAKERAEERAAKLAAAEEAANAPAEEPAAEPAAEEVTEVAAEAPAEEAAAEESTEA.

The disordered stretch occupies residues 82–154; that stretch reads VQERAARSNP…EAAAEESTEA (73 aa). Residues 92–109 show a composition bias toward basic and acidic residues; the sequence is KKAEPGEKAKERAEERAA. Low complexity predominate over residues 110–129; that stretch reads KLAAAEEAANAPAEEPAAEP. Positions 142-154 are enriched in acidic residues; sequence PAEEAAAEESTEA.

Belongs to the bacterial ribosomal protein bS16 family.

The sequence is that of Small ribosomal subunit protein bS16 from Rhizorhabdus wittichii (strain DSM 6014 / CCUG 31198 / JCM 15750 / NBRC 105917 / EY 4224 / RW1) (Sphingomonas wittichii).